Consider the following 201-residue polypeptide: FMN-dependent NADH:quinone oxidoreductase (201 aa).

FMN is bound by residues Ser10, 16 to 18 (SQS), 96 to 99 (MYNF), and 140 to 143 (SRGG).

The protein belongs to the azoreductase type 1 family. As to quaternary structure, homodimer. FMN serves as cofactor.

It catalyses the reaction 2 a quinone + NADH + H(+) = 2 a 1,4-benzosemiquinone + NAD(+). It carries out the reaction N,N-dimethyl-1,4-phenylenediamine + anthranilate + 2 NAD(+) = 2-(4-dimethylaminophenyl)diazenylbenzoate + 2 NADH + 2 H(+). Its function is as follows. Quinone reductase that provides resistance to thiol-specific stress caused by electrophilic quinones. Functionally, also exhibits azoreductase activity. Catalyzes the reductive cleavage of the azo bond in aromatic azo compounds to the corresponding amines. In Escherichia coli O9:H4 (strain HS), this protein is FMN-dependent NADH:quinone oxidoreductase.